A 511-amino-acid polypeptide reads, in one-letter code: Maturase K (511 aa).

This sequence belongs to the intron maturase 2 family. MatK subfamily.

It is found in the plastid. Its subcellular location is the chloroplast. Its function is as follows. Usually encoded in the trnK tRNA gene intron. Probably assists in splicing its own and other chloroplast group II introns. This Paulownia tomentosa (Princess tree) protein is Maturase K.